The chain runs to 370 residues: Phospho-2-dehydro-3-deoxyheptonate aldolase, tyrosine-inhibited (370 aa).

N-acetylserine is present on Ser-2.

The protein belongs to the class-I DAHP synthase family.

The enzyme catalyses D-erythrose 4-phosphate + phosphoenolpyruvate + H2O = 7-phospho-2-dehydro-3-deoxy-D-arabino-heptonate + phosphate. The protein operates within metabolic intermediate biosynthesis; chorismate biosynthesis; chorismate from D-erythrose 4-phosphate and phosphoenolpyruvate: step 1/7. Inhibited by tyrosine. Functionally, stereospecific condensation of phosphoenolpyruvate (PEP) and D-erythrose-4-phosphate (E4P) giving rise to 3-deoxy-D-arabino-heptulosonate-7-phosphate (DAHP). In Saccharomyces cerevisiae (strain ATCC 204508 / S288c) (Baker's yeast), this protein is Phospho-2-dehydro-3-deoxyheptonate aldolase, tyrosine-inhibited (ARO4).